The sequence spans 513 residues: Probable E3 ubiquitin-protein ligase XBOS34 (513 aa).

ANK repeat units follow at residues E39–A69, Y75–I104, and D108–G137. Polar residues-rich tracts occupy residues I309–N327 and S335–N355. Disordered regions lie at residues I309–T378 and S423–G455. The segment covering G361–T378 has biased composition (low complexity). Residues A436–E446 show a composition bias toward basic and acidic residues. The segment at C462–R501 adopts an RING-type zinc-finger fold.

The catalysed reaction is S-ubiquitinyl-[E2 ubiquitin-conjugating enzyme]-L-cysteine + [acceptor protein]-L-lysine = [E2 ubiquitin-conjugating enzyme]-L-cysteine + N(6)-ubiquitinyl-[acceptor protein]-L-lysine.. The protein operates within protein modification; protein ubiquitination. This chain is Probable E3 ubiquitin-protein ligase XBOS34 (XBOS34), found in Oryza sativa subsp. japonica (Rice).